Here is a 251-residue protein sequence, read N- to C-terminus: 3-deoxy-manno-octulosonate cytidylyltransferase (251 aa).

It belongs to the KdsB family.

Its subcellular location is the cytoplasm. It carries out the reaction 3-deoxy-alpha-D-manno-oct-2-ulosonate + CTP = CMP-3-deoxy-beta-D-manno-octulosonate + diphosphate. The protein operates within nucleotide-sugar biosynthesis; CMP-3-deoxy-D-manno-octulosonate biosynthesis; CMP-3-deoxy-D-manno-octulosonate from 3-deoxy-D-manno-octulosonate and CTP: step 1/1. It participates in bacterial outer membrane biogenesis; lipopolysaccharide biosynthesis. In terms of biological role, activates KDO (a required 8-carbon sugar) for incorporation into bacterial lipopolysaccharide in Gram-negative bacteria. The chain is 3-deoxy-manno-octulosonate cytidylyltransferase from Rhizobium leguminosarum bv. trifolii (strain WSM2304).